Here is a 715-residue protein sequence, read N- to C-terminus: Methylcrotonoyl-CoA carboxylase subunit alpha, mitochondrial (715 aa).

A mitochondrion-targeting transit peptide spans 1 to 38 (MAAAALLAAVDRNQLRRVPILLLQPREWPWKHRTVKYG). The Biotin carboxylation domain occupies 45–490 (ITKVLIANRG…HTDFIPQHHK (446 aa)). K159 contributes to the ATP binding site. In terms of domain architecture, ATP-grasp spans 163–360 (KSIMAAAGVP…LVEWQLRIAA (198 aa)). At K193 the chain carries N6-acetyllysine. Residues K201 and 207-208 (GG) each bind ATP. At K233 the chain carries N6-acetyllysine. H251, H278, and E318 together coordinate ATP. R335 is a catalytic residue. K490 carries the N6-acetyllysine modification. The residue at position 577 (K577) is an N6-acetyllysine; alternate. Residue K577 is modified to N6-succinyllysine; alternate. Residues 622–711 (SIEVGIPVPK…NRHAPLVEFE (90 aa)) form the Biotinyl-binding domain. K677 is subject to N6-biotinyllysine.

Probably a dodecamer composed of six biotin-containing alpha subunits (MCCC1) and six beta (MCCC2) subunits. Interacts (via the biotin carboxylation domain) with SIRT4. Biotin serves as cofactor. Post-translationally, acetylated.

It localises to the mitochondrion matrix. The catalysed reaction is 3-methylbut-2-enoyl-CoA + hydrogencarbonate + ATP = 3-methyl-(2E)-glutaconyl-CoA + ADP + phosphate + H(+). It functions in the pathway amino-acid degradation; L-leucine degradation; (S)-3-hydroxy-3-methylglutaryl-CoA from 3-isovaleryl-CoA: step 2/3. In terms of biological role, biotin-attachment subunit of the 3-methylcrotonyl-CoA carboxylase, an enzyme that catalyzes the conversion of 3-methylcrotonyl-CoA to 3-methylglutaconyl-CoA, a critical step for leucine and isovaleric acid catabolism. The protein is Methylcrotonoyl-CoA carboxylase subunit alpha, mitochondrial of Rattus norvegicus (Rat).